The following is a 78-amino-acid chain: Translation initiation factor IF-1, chloroplastic (78 aa).

One can recognise an S1-like domain in the interval 1 to 72 (MKKQKLIDME…TKGRITYRFH (72 aa)).

This sequence belongs to the IF-1 family. In terms of assembly, component of the 30S ribosomal translation pre-initiation complex which assembles on the 30S ribosome in the order IF-2 and IF-3, IF-1 and N-formylmethionyl-tRNA(fMet); mRNA recruitment can occur at any time during PIC assembly.

It localises to the plastid. The protein localises to the chloroplast. In terms of biological role, one of the essential components for the initiation of protein synthesis. Stabilizes the binding of IF-2 and IF-3 on the 30S subunit to which N-formylmethionyl-tRNA(fMet) subsequently binds. Helps modulate mRNA selection, yielding the 30S pre-initiation complex (PIC). Upon addition of the 50S ribosomal subunit IF-1, IF-2 and IF-3 are released leaving the mature 70S translation initiation complex. This is Translation initiation factor IF-1, chloroplastic from Huperzia lucidula (Shining clubmoss).